The sequence spans 363 residues: S-adenosylmethionine:tRNA ribosyltransferase-isomerase (363 aa).

The protein belongs to the QueA family. In terms of assembly, monomer.

It localises to the cytoplasm. The catalysed reaction is 7-aminomethyl-7-carbaguanosine(34) in tRNA + S-adenosyl-L-methionine = epoxyqueuosine(34) in tRNA + adenine + L-methionine + 2 H(+). It functions in the pathway tRNA modification; tRNA-queuosine biosynthesis. In terms of biological role, transfers and isomerizes the ribose moiety from AdoMet to the 7-aminomethyl group of 7-deazaguanine (preQ1-tRNA) to give epoxyqueuosine (oQ-tRNA). The chain is S-adenosylmethionine:tRNA ribosyltransferase-isomerase from Haemophilus influenzae (strain 86-028NP).